The primary structure comprises 163 residues: Acetolactate synthase isozyme 3 small subunit (163 aa).

One can recognise an ACT domain in the interval 4–78 (ILSVLLENES…DVLRVSELGQ (75 aa)).

Belongs to the acetolactate synthase small subunit family. As to quaternary structure, dimer of large and small chains.

The catalysed reaction is 2 pyruvate + H(+) = (2S)-2-acetolactate + CO2. The protein operates within amino-acid biosynthesis; L-isoleucine biosynthesis; L-isoleucine from 2-oxobutanoate: step 1/4. Its pathway is amino-acid biosynthesis; L-valine biosynthesis; L-valine from pyruvate: step 1/4. Its activity is regulated as follows. Sensitive to valine inhibition. In Escherichia coli (strain K12), this protein is Acetolactate synthase isozyme 3 small subunit (ilvH).